Consider the following 112-residue polypeptide: Integration host factor subunit alpha (112 aa).

It belongs to the bacterial histone-like protein family. Heterodimer of an alpha and a beta chain.

This protein is one of the two subunits of integration host factor, a specific DNA-binding protein that functions in genetic recombination as well as in transcriptional and translational control. This chain is Integration host factor subunit alpha, found in Agrobacterium fabrum (strain C58 / ATCC 33970) (Agrobacterium tumefaciens (strain C58)).